We begin with the raw amino-acid sequence, 508 residues long: Light-independent protochlorophyllide reductase subunit B (508 aa).

A [4Fe-4S] cluster-binding site is contributed by Asp-36. Asp-294 acts as the Proton donor in catalysis. 429-430 (GM) contributes to the substrate binding site.

The protein belongs to the ChlB/BchB/BchZ family. As to quaternary structure, protochlorophyllide reductase is composed of three subunits; ChlL, ChlN and ChlB. Forms a heterotetramer of two ChlB and two ChlN subunits. The cofactor is [4Fe-4S] cluster.

The enzyme catalyses chlorophyllide a + oxidized 2[4Fe-4S]-[ferredoxin] + 2 ADP + 2 phosphate = protochlorophyllide a + reduced 2[4Fe-4S]-[ferredoxin] + 2 ATP + 2 H2O. The protein operates within porphyrin-containing compound metabolism; chlorophyll biosynthesis (light-independent). In terms of biological role, component of the dark-operative protochlorophyllide reductase (DPOR) that uses Mg-ATP and reduced ferredoxin to reduce ring D of protochlorophyllide (Pchlide) to form chlorophyllide a (Chlide). This reaction is light-independent. The NB-protein (ChlN-ChlB) is the catalytic component of the complex. The protein is Light-independent protochlorophyllide reductase subunit B of Acaryochloris marina (strain MBIC 11017).